A 320-amino-acid polypeptide reads, in one-letter code: 1-aminocyclopropane-1-carboxylate oxidase (320 aa).

The Fe2OG dioxygenase domain maps to 156-256 (PTFGTKVSNY…RMSIASFYNP (101 aa)). Fe cation is bound by residues histidine 180, aspartate 182, and histidine 237.

The protein belongs to the iron/ascorbate-dependent oxidoreductase family. Requires Fe cation as cofactor.

It catalyses the reaction 1-aminocyclopropane-1-carboxylate + L-ascorbate + O2 = ethene + L-dehydroascorbate + hydrogen cyanide + CO2 + 2 H2O. The protein operates within alkene biosynthesis; ethylene biosynthesis via S-adenosyl-L-methionine; ethylene from S-adenosyl-L-methionine: step 2/2. The protein is 1-aminocyclopropane-1-carboxylate oxidase (ACO) of Brassica juncea (Indian mustard).